A 564-amino-acid chain; its full sequence is O-fucosyltransferase 6 (564 aa).

Residues 17 to 37 form a helical; Signal-anchor for type II membrane protein membrane-spanning segment; it reads LLPFICAVSGALLILFALLSI. N-linked (GlcNAc...) asparagine glycosylation is found at Asn-95 and Asn-139. Substrate is bound at residue 277-279; the sequence is HLR. Asn-449 carries N-linked (GlcNAc...) asparagine glycosylation. Positions 501–512 are enriched in basic and acidic residues; the sequence is MDSRKFGKKEQK. Residues 501–542 form a disordered region; the sequence is MDSRKFGKKEQKEDEDAELSSSETDYEEDQTDLQDRGLYNGT. A compositionally biased stretch (acidic residues) spans 513-532; that stretch reads EDEDAELSSSETDYEEDQTD. Residue Asn-540 is glycosylated (N-linked (GlcNAc...) asparagine).

The protein belongs to the glycosyltransferase GT106 family.

The protein localises to the membrane. It participates in glycan metabolism. This chain is O-fucosyltransferase 6, found in Arabidopsis thaliana (Mouse-ear cress).